We begin with the raw amino-acid sequence, 276 residues long: Expansin-A25 (276 aa).

Positions 1–27 (MKLLEQMVYVECFMIIMATLLVSMSYG) are cleaved as a signal peptide. Positions 73–183 (QGACGYGDLF…RRISCARTGG (111 aa)) constitute an Expansin-like EG45 domain. Residues 193 to 272 (YFLMILPYNV…NWGFGQTFDG (80 aa)) form the Expansin-like CBD domain.

This sequence belongs to the expansin family. Expansin A subfamily.

The protein resides in the secreted. It localises to the cell wall. It is found in the membrane. Causes loosening and extension of plant cell walls by disrupting non-covalent bonding between cellulose microfibrils and matrix glucans. No enzymatic activity has been found. This is Expansin-A25 (EXPA25) from Arabidopsis thaliana (Mouse-ear cress).